Reading from the N-terminus, the 332-residue chain is Probable allantoicase (332 aa).

It belongs to the allantoicase family.

It carries out the reaction allantoate + H2O = (S)-ureidoglycolate + urea. Its pathway is nitrogen metabolism; (S)-allantoin degradation; (S)-ureidoglycolate from allantoate (aminidohydrolase route): step 1/1. The polypeptide is Probable allantoicase (Pseudomonas aeruginosa (strain LESB58)).